Consider the following 424-residue polypeptide: Anaerobic glycerol-3-phosphate dehydrogenase subunit B (424 aa).

It belongs to the anaerobic G-3-P dehydrogenase subunit B family. As to quaternary structure, composed of a catalytic GlpA/B dimer and of membrane bound GlpC. It depends on FMN as a cofactor.

It carries out the reaction a quinone + sn-glycerol 3-phosphate = dihydroxyacetone phosphate + a quinol. Its pathway is polyol metabolism; glycerol degradation via glycerol kinase pathway; glycerone phosphate from sn-glycerol 3-phosphate (anaerobic route): step 1/1. Conversion of glycerol 3-phosphate to dihydroxyacetone. Uses fumarate or nitrate as electron acceptor. This chain is Anaerobic glycerol-3-phosphate dehydrogenase subunit B, found in Yersinia enterocolitica serotype O:8 / biotype 1B (strain NCTC 13174 / 8081).